Reading from the N-terminus, the 359-residue chain is Double-stranded RNA-binding protein 3 (359 aa).

2 DRBM domains span residues 1-70 and 87-155; these read MYKN…ALSS and IYKN…SLRK. Over residues 266–280 the composition is skewed to basic and acidic residues; the sequence is EKKQSLDDPKPEMRI. Disordered regions lie at residues 266–292 and 328–359; these read EKKQ…SSSV and APPP…SLPN. The span at 328–338 shows a compositional bias: pro residues; it reads APPPKPNPNPN.

In terms of biological role, binds double-stranded RNA. In Arabidopsis thaliana (Mouse-ear cress), this protein is Double-stranded RNA-binding protein 3 (DRB3).